The following is a 278-amino-acid chain: Large ribosomal subunit protein uL2 (278 aa).

A disordered region spans residues 226–278 (NPIDHPHGGGEGRTSGGRHPVTPWGKPTKGKKTRSNKSTDKFILISRHKRKKK).

Belongs to the universal ribosomal protein uL2 family. Part of the 50S ribosomal subunit. Forms a bridge to the 30S subunit in the 70S ribosome.

Functionally, one of the primary rRNA binding proteins. Required for association of the 30S and 50S subunits to form the 70S ribosome, for tRNA binding and peptide bond formation. It has been suggested to have peptidyltransferase activity; this is somewhat controversial. Makes several contacts with the 16S rRNA in the 70S ribosome. This chain is Large ribosomal subunit protein uL2, found in Rhodopseudomonas palustris (strain HaA2).